The primary structure comprises 127 residues: Fluoride-specific ion channel FluC (127 aa).

4 helical membrane-spanning segments follow: residues 3-23, 38-58, 67-87, and 102-122; these read LVFLWAALGGALGSSLRYFVG, LGTFSVNLIGCFVIGLMGHLA, FGIFFVTGVLGGFTTFSSYGL, and ISYVLGTNILGLIGVAIGWFL. Na(+) contacts are provided by glycine 77 and threonine 80.

The protein belongs to the fluoride channel Fluc/FEX (TC 1.A.43) family.

The protein resides in the cell inner membrane. The enzyme catalyses fluoride(in) = fluoride(out). Its activity is regulated as follows. Na(+) is not transported, but it plays an essential structural role and its presence is essential for fluoride channel function. Its function is as follows. Fluoride-specific ion channel. Important for reducing fluoride concentration in the cell, thus reducing its toxicity. This Helicobacter acinonychis (strain Sheeba) protein is Fluoride-specific ion channel FluC.